Reading from the N-terminus, the 364-residue chain is MPGNSFGHVFRLTTWGESHGPAVGCTVDGCPAGLPLDVADIQRELDRRRVGQSRVSSQRREADEVQILSGVFEGRTTGTPITMVVYNTDAKSHHYDTIKDAYRPGHADYTWDVKYGFRDWRGGGRSSARETIGRVAGGAIARKLLATVGVTIVGYTLQLADLRAEVFDEAEIERNIMRCPDARVAALMVERVDQARRELDSLGGIVEVRARGVPPGLGEPVFDKLQADIGKAMFSIPAIKGVEIGEGFGVAMLRGSQNNDPFIRREDGSIGTTSNHHGGILGGISTGEEIVVRLAAKPPASIARPQQTVDRDGNPVTIEVHGRHDPTVLPRLVPVAEAMLALVLADHLLRQRLARVSWSERDDG.

NADP(+) is bound by residues R48 and R54. Residues 125 to 127, G282, 297 to 301, and R323 contribute to the FMN site; these read RSS and KPPAS.

This sequence belongs to the chorismate synthase family. Homotetramer. FMNH2 is required as a cofactor.

It catalyses the reaction 5-O-(1-carboxyvinyl)-3-phosphoshikimate = chorismate + phosphate. It participates in metabolic intermediate biosynthesis; chorismate biosynthesis; chorismate from D-erythrose 4-phosphate and phosphoenolpyruvate: step 7/7. Functionally, catalyzes the anti-1,4-elimination of the C-3 phosphate and the C-6 proR hydrogen from 5-enolpyruvylshikimate-3-phosphate (EPSP) to yield chorismate, which is the branch point compound that serves as the starting substrate for the three terminal pathways of aromatic amino acid biosynthesis. This reaction introduces a second double bond into the aromatic ring system. The chain is Chorismate synthase from Chloroflexus aggregans (strain MD-66 / DSM 9485).